Consider the following 320-residue polypeptide: Ino eighty subunit 2 (320 aa).

Composition is skewed to acidic residues over residues 1–12 (MDSEASDIEAEL) and 22–35 (EYID…DIDD). Disordered stretches follow at residues 1–232 (MDSE…SKKK) and 244–306 (ENAR…EGMT). Residues 42-59 (SSRRTARRSVPKGVRTSK) are compositionally biased toward basic residues. Phosphoserine is present on serine 67. Positions 68–80 (VEVDEDYDEEEDV) are enriched in acidic residues. Residues 105–116 (EKSDIGDSKGND) show a composition bias toward basic and acidic residues. A compositionally biased stretch (acidic residues) spans 117 to 130 (GEIEDGILEEEESL). At serine 129 the chain carries Phosphoserine. Residues 131 to 147 (EKELNRGGGKEVEKSEE) show a composition bias toward basic and acidic residues. The segment covering 161–174 (EEQDGESGGYEDNE) has biased composition (acidic residues). The segment covering 207 to 217 (TDSTRSTTTRS) has biased composition (low complexity). Basic and acidic residues predominate over residues 244 to 264 (ENARKRKNLSEKRLEEEKQDT). Residues 268–278 (LLKKRAGKSRS) are compositionally biased toward basic residues.

The protein belongs to the IES2 family. Component of the chromatin-remodeling INO80 complex, at least composed of ARP4, ARP5, ARP8, RVB1, RVB2, TAF14, NHP10, IES1, IES3, IES4, IES6, ACT1, IES2, IES5 and INO80.

It is found in the nucleus. In terms of biological role, component of the INO80 complex which remodels chromatin by shifting nucleosomes and is involved in DNA repair. This chain is Ino eighty subunit 2 (IES2), found in Saccharomyces cerevisiae (strain ATCC 204508 / S288c) (Baker's yeast).